We begin with the raw amino-acid sequence, 398 residues long: S-adenosylmethionine synthase (398 aa).

Residue H16 coordinates ATP. D18 lines the Mg(2+) pocket. E51 serves as a coordination point for K(+). 2 residues coordinate L-methionine: E64 and Q108. The tract at residues 108–118 (QSADIAQGVDA) is flexible loop. ATP is bound by residues 176–178 (DSK), 242–243 (KF), D251, 257–258 (RK), A274, and K278. D251 provides a ligand contact to L-methionine. An L-methionine-binding site is contributed by K282.

The protein belongs to the AdoMet synthase family. Homotetramer; dimer of dimers. It depends on Mg(2+) as a cofactor. K(+) is required as a cofactor.

The protein localises to the cytoplasm. The enzyme catalyses L-methionine + ATP + H2O = S-adenosyl-L-methionine + phosphate + diphosphate. It participates in amino-acid biosynthesis; S-adenosyl-L-methionine biosynthesis; S-adenosyl-L-methionine from L-methionine: step 1/1. Its function is as follows. Catalyzes the formation of S-adenosylmethionine (AdoMet) from methionine and ATP. The overall synthetic reaction is composed of two sequential steps, AdoMet formation and the subsequent tripolyphosphate hydrolysis which occurs prior to release of AdoMet from the enzyme. This Rhodopseudomonas palustris (strain HaA2) protein is S-adenosylmethionine synthase.